The chain runs to 270 residues: MTIKNEEQQQQTNKLKYPKNLLSSGLDGEGNTYINIEDLWKKELEGKDNKMEDKWYKSADEYWKGVEATVDGMLGGLAQVSPIDVVASKVFIQDFIKGTDSRPPINLNLALDCGAGIGRVAKEFLLPIGFKNVDLVEQNKLFLDKAKSDNFKDDNRVENYYAVGLQDFTFEKKYDCIWIQWVIGHLHDLDFIEFLKKCMDSLTPNGIICIKDNCAKKRFIMDKEDNSVSRTEDHLKYLFDQAGCKLLKSMVQPNFPKELFPVLMFALERK.

Residues Gly-114, Arg-119, 137-139 (EQN), 165-166 (LQ), and Gln-180 each bind S-adenosyl-L-methionine.

This sequence belongs to the methyltransferase superfamily. NTM1 family.

It catalyses the reaction N-terminal L-alanyl-L-prolyl-L-lysyl-[protein] + 3 S-adenosyl-L-methionine = N-terminal N,N,N-trimethyl-L-alanyl-L-prolyl-L-lysyl-[protein] + 3 S-adenosyl-L-homocysteine + 3 H(+). It carries out the reaction N-terminal L-seryl-L-prolyl-L-lysyl-[protein] + 3 S-adenosyl-L-methionine = N-terminal N,N,N-trimethyl-L-seryl-L-prolyl-L-lysyl-[protein] + 3 S-adenosyl-L-homocysteine + 3 H(+). The enzyme catalyses N-terminal L-prolyl-L-prolyl-L-lysyl-[protein] + 2 S-adenosyl-L-methionine = N-terminal N,N-dimethyl-L-prolyl-L-prolyl-L-lysyl-[protein] + 2 S-adenosyl-L-homocysteine + 2 H(+). Alpha-N-methyltransferase that methylates the N-terminus of target proteins containing the N-terminal motif [Ala/Pro/Ser]-Pro-Lys when the initiator Met is cleaved. Specifically catalyzes mono-, di- or tri-methylation of exposed alpha-amino group of Ala or Ser residue in the [Ala/Ser]-Pro-Lys motif and mono- or di-methylation of Pro in the Pro-Pro-Lys motif. In Dictyostelium discoideum (Social amoeba), this protein is Alpha N-terminal protein methyltransferase 1.